The sequence spans 150 residues: Ribonuclease H (150 aa).

The RNase H type-1 domain maps to 1–141 (MRPVIIHTDG…ADQLARDGLT (141 aa)). Residues Asp9, Glu47, Asp69, and Asp133 each contribute to the Mg(2+) site.

This sequence belongs to the RNase H family. In terms of assembly, monomer. It depends on Mg(2+) as a cofactor.

It localises to the cytoplasm. It carries out the reaction Endonucleolytic cleavage to 5'-phosphomonoester.. Functionally, endonuclease that specifically degrades the RNA of RNA-DNA hybrids. The protein is Ribonuclease H of Rhodopseudomonas palustris (strain BisB5).